A 273-amino-acid polypeptide reads, in one-letter code: Nitrogenase iron protein 4 (273 aa).

8-15 (GKGGIGKS) contacts ATP. [4Fe-4S] cluster is bound at residue Cys-94. Arg-97 is modified (ADP-ribosylarginine; by dinitrogenase reductase ADP-ribosyltransferase). Cys-129 lines the [4Fe-4S] cluster pocket.

It belongs to the NifH/BchL/ChlL family. In terms of assembly, homodimer. The cofactor is [4Fe-4S] cluster. The reversible ADP-ribosylation of Arg-97 inactivates the nitrogenase reductase and regulates nitrogenase activity.

It catalyses the reaction N2 + 8 reduced [2Fe-2S]-[ferredoxin] + 16 ATP + 16 H2O = H2 + 8 oxidized [2Fe-2S]-[ferredoxin] + 2 NH4(+) + 16 ADP + 16 phosphate + 6 H(+). In terms of biological role, the key enzymatic reactions in nitrogen fixation are catalyzed by the nitrogenase complex, which has 2 components: the iron protein and the molybdenum-iron protein. The chain is Nitrogenase iron protein 4 (nifH4) from Clostridium pasteurianum.